The sequence spans 395 residues: Probable L-tyrosine/L-aspartate decarboxylase (395 aa).

Lys-242 bears the N6-(pyridoxal phosphate)lysine mark.

This sequence belongs to the group II decarboxylase family. MfnA subfamily. Requires pyridoxal 5'-phosphate as cofactor.

It carries out the reaction L-tyrosine + H(+) = tyramine + CO2. The enzyme catalyses L-aspartate + H(+) = beta-alanine + CO2. The protein operates within cofactor biosynthesis; methanofuran biosynthesis. It functions in the pathway cofactor biosynthesis; coenzyme A biosynthesis. Its function is as follows. Catalyzes the decarboxylation of L-tyrosine to produce tyramine for methanofuran biosynthesis. Can also catalyze the decarboxylation of L-aspartate to produce beta-alanine for coenzyme A (CoA) biosynthesis. The chain is Probable L-tyrosine/L-aspartate decarboxylase from Methanosarcina acetivorans (strain ATCC 35395 / DSM 2834 / JCM 12185 / C2A).